The chain runs to 113 residues: Nucleoid-associated protein FMG_0513 (113 aa).

Positions 1–44 (MGNKFRGGMPGMGNMGNMMKQMQKMQRQMEETQKRLEETEVTAT) are disordered. A compositionally biased stretch (low complexity) spans 15 to 26 (MGNMMKQMQKMQ). Residues 27 to 38 (RQMEETQKRLEE) are compositionally biased toward basic and acidic residues.

Belongs to the YbaB/EbfC family. As to quaternary structure, homodimer.

The protein localises to the cytoplasm. Its subcellular location is the nucleoid. In terms of biological role, binds to DNA and alters its conformation. May be involved in regulation of gene expression, nucleoid organization and DNA protection. The polypeptide is Nucleoid-associated protein FMG_0513 (Finegoldia magna (strain ATCC 29328 / DSM 20472 / WAL 2508) (Peptostreptococcus magnus)).